The sequence spans 188 residues: Phosphatidylinositol N-acetylglucosaminyltransferase subunit H (188 aa).

It belongs to the PIGH family. As to quaternary structure, component of the glycosylphosphatidylinositol-N-acetylglucosaminyltransferase (GPI-GnT) complex composed at least by PIGA, PIGC, PIGH, PIGP, PIGQ, PIGY and DPM2. Interacts with PIGQ.

The protein resides in the cytoplasm. Its pathway is glycolipid biosynthesis; glycosylphosphatidylinositol-anchor biosynthesis. Functionally, part of the glycosylphosphatidylinositol-N-acetylglucosaminyltransferase (GPI-GnT) complex that catalyzes the transfer of N-acetylglucosamine from UDP-N-acetylglucosamine to phosphatidylinositol and participates in the first step of GPI biosynthesis. This is Phosphatidylinositol N-acetylglucosaminyltransferase subunit H from Homo sapiens (Human).